The primary structure comprises 196 residues: ECF RNA polymerase sigma factor SigM (196 aa).

The segment at 39–105 (LFRRHHRQLH…ACLDRLRRAK (67 aa)) is sigma-70 factor domain-2. Positions 63–66 (DALQ) match the Interaction with polymerase core subunit RpoC motif. The sigma-70 factor domain-4 stretch occupies residues 130–181 (AVQRALMRLPVEQRAAVVAVDMQGYSIADTARMLGVAEGTVKSRCARARARL). Residues 156 to 175 (IADTARMLGVAEGTVKSRCA) constitute a DNA-binding region (H-T-H motif).

Belongs to the sigma-70 factor family. ECF subfamily. As to quaternary structure, interacts transiently with the RNA polymerase catalytic core formed by RpoA, RpoB, RpoC and RpoZ (2 alpha, 1 beta, 1 beta' and 1 omega subunit) to form the RNA polymerase holoenzyme that can initiate transcription. Interacts (via sigma-70 factor domain 4) with anti-sigma-M factor RsmA.

Functionally, sigma factors are initiation factors that promote the attachment of RNA polymerase to specific initiation sites and are then released. Extracytoplasmic function (ECF) sigma factors are held in an inactive form by an anti-sigma factor until released by regulated intramembrane proteolysis. The sequence is that of ECF RNA polymerase sigma factor SigM (sigM) from Mycobacterium tuberculosis (strain ATCC 35801 / TMC 107 / Erdman).